The primary structure comprises 51 residues: Defensin-like protein 2A (51 aa).

Residue Q1 is modified to Pyrrolidone carboxylic acid. Disulfide bonds link C4/C51, C15/C36, C21/C45, and C25/C47. A Phosphoserine; by CPK modification is found at S8.

Forms oligomers in its native state.

Possesses antifungal activity sensitive to inorganic cations. The sequence is that of Defensin-like protein 2A from Sinapis alba (White mustard).